The primary structure comprises 223 residues: Phosphoribosylformylglycinamidine synthase subunit PurQ (223 aa).

Residues serine 3 to alanine 223 enclose the Glutamine amidotransferase type-1 domain. Cysteine 86 serves as the catalytic Nucleophile. Active-site residues include histidine 196 and glutamate 198.

Part of the FGAM synthase complex composed of 1 PurL, 1 PurQ and 2 PurS subunits.

Its subcellular location is the cytoplasm. It carries out the reaction N(2)-formyl-N(1)-(5-phospho-beta-D-ribosyl)glycinamide + L-glutamine + ATP + H2O = 2-formamido-N(1)-(5-O-phospho-beta-D-ribosyl)acetamidine + L-glutamate + ADP + phosphate + H(+). The enzyme catalyses L-glutamine + H2O = L-glutamate + NH4(+). The protein operates within purine metabolism; IMP biosynthesis via de novo pathway; 5-amino-1-(5-phospho-D-ribosyl)imidazole from N(2)-formyl-N(1)-(5-phospho-D-ribosyl)glycinamide: step 1/2. Its function is as follows. Part of the phosphoribosylformylglycinamidine synthase complex involved in the purines biosynthetic pathway. Catalyzes the ATP-dependent conversion of formylglycinamide ribonucleotide (FGAR) and glutamine to yield formylglycinamidine ribonucleotide (FGAM) and glutamate. The FGAM synthase complex is composed of three subunits. PurQ produces an ammonia molecule by converting glutamine to glutamate. PurL transfers the ammonia molecule to FGAR to form FGAM in an ATP-dependent manner. PurS interacts with PurQ and PurL and is thought to assist in the transfer of the ammonia molecule from PurQ to PurL. The chain is Phosphoribosylformylglycinamidine synthase subunit PurQ from Rhizobium johnstonii (strain DSM 114642 / LMG 32736 / 3841) (Rhizobium leguminosarum bv. viciae).